A 195-amino-acid chain; its full sequence is Protein LIGHT-DEPENDENT SHORT HYPOCOTYLS 4 (195 aa).

A compositionally biased stretch (low complexity) spans 28 to 38 (TTTSSSSSSSS). 2 disordered regions span residues 28–51 (TTTSSSSSSSSGGSGTNQLSRYEN) and 162–195 (SQAKARGISYEKKKRKRPPPPLPPAQPAISSSPN). One can recognise an ALOG domain in the interval 48-175 (RYENQKRRDW…ARGISYEKKK (128 aa)). The Nuclear localization signal signature appears at 173–177 (KKKRK).

The protein belongs to the plant homeotic and developmental regulators ALOG protein family. In terms of tissue distribution, induced by NAC054/CUC1 and NAC098/CUC2 in shoot organ boundary cells.

Its subcellular location is the nucleus. In terms of biological role, probable transcription regulator that acts as a developmental regulator by promoting cell growth in response to light. May suppress organ differentiation in the boundary region. The chain is Protein LIGHT-DEPENDENT SHORT HYPOCOTYLS 4 (LSH4) from Arabidopsis thaliana (Mouse-ear cress).